Consider the following 101-residue polypeptide: Small ribosomal subunit protein uS14 (101 aa).

It belongs to the universal ribosomal protein uS14 family. As to quaternary structure, part of the 30S ribosomal subunit. Contacts proteins S3 and S10.

Binds 16S rRNA, required for the assembly of 30S particles and may also be responsible for determining the conformation of the 16S rRNA at the A site. This is Small ribosomal subunit protein uS14 from Novosphingobium aromaticivorans (strain ATCC 700278 / DSM 12444 / CCUG 56034 / CIP 105152 / NBRC 16084 / F199).